Reading from the N-terminus, the 171-residue chain is Ribosome-binding factor A (171 aa).

The segment covering 126 to 138 (VREGAKHAGDADP) has biased composition (basic and acidic residues). The segment at 126–171 (VREGAKHAGDADPYRVSGVEEEAGGSGEVQAEFDAEDTGDRNRQDD) is disordered.

Belongs to the RbfA family. In terms of assembly, monomer. Binds 30S ribosomal subunits, but not 50S ribosomal subunits or 70S ribosomes.

Its subcellular location is the cytoplasm. Its function is as follows. One of several proteins that assist in the late maturation steps of the functional core of the 30S ribosomal subunit. Associates with free 30S ribosomal subunits (but not with 30S subunits that are part of 70S ribosomes or polysomes). Required for efficient processing of 16S rRNA. May interact with the 5'-terminal helix region of 16S rRNA. The protein is Ribosome-binding factor A of Mycobacterium sp. (strain JLS).